The primary structure comprises 182 residues: Small ribosomal subunit protein uS4c (182 aa).

Residues 82-143 enclose the S4 RNA-binding domain; sequence MRLDNILFRL…KQRSKALIQN (62 aa).

Belongs to the universal ribosomal protein uS4 family. Part of the 30S ribosomal subunit. Contacts protein S5. The interaction surface between S4 and S5 is involved in control of translational fidelity.

The protein localises to the plastid. It localises to the chloroplast. In terms of biological role, one of the primary rRNA binding proteins, it binds directly to 16S rRNA where it nucleates assembly of the body of the 30S subunit. Its function is as follows. With S5 and S12 plays an important role in translational accuracy. The sequence is that of Small ribosomal subunit protein uS4c (rps4) from Iris domestica (Leopard lily).